Reading from the N-terminus, the 146-residue chain is Leptin (146 aa).

C96 and C146 are joined by a disulfide.

This sequence belongs to the leptin family.

Its subcellular location is the secreted. Functionally, key player in the regulation of energy balance and body weight control. Once released into the circulation, has central and peripheral effects by binding LEPR, found in many tissues, which results in the activation of several major signaling pathways. In the hypothalamus, acts as an appetite-regulating factor that induces a decrease in food intake and an increase in energy consumption by inducing anorexinogenic factors and suppressing orexigenic neuropeptides, also regulates bone mass and secretion of hypothalamo-pituitary-adrenal hormones. In the periphery, increases basal metabolism, influences reproductive function, regulates pancreatic beta-cell function and insulin secretion, is pro-angiogenic for endothelial cell and affects innate and adaptive immunity. In the arcuate nucleus of the hypothalamus, activates by depolarization POMC neurons inducing FOS and SOCS3 expression to release anorexigenic peptides and inhibits by hyperpolarization NPY neurons inducing SOCS3 with a consequent reduction on release of orexigenic peptides. In addition to its known satiety inducing effect, has a modulatory role in nutrient absorption. In the intestine, reduces glucose absorption by enterocytes by activating PKC and leading to a sequential activation of p38, PI3K and ERK signaling pathways which exerts an inhibitory effect on glucose absorption. Acts as a growth factor on certain tissues, through the activation of different signaling pathways increases expression of genes involved in cell cycle regulation such as CCND1, via JAK2-STAT3 pathway, or VEGFA, via MAPK1/3 and PI3K-AKT1 pathways. May also play an apoptotic role via JAK2-STAT3 pathway and up-regulation of BIRC5 expression. Pro-angiogenic, has mitogenic activity on vascular endothelial cells and plays a role in matrix remodeling by regulating the expression of matrix metalloproteinases (MMPs) and tissue inhibitors of metalloproteinases (TIMPs). In innate immunity, modulates the activity and function of neutrophils by increasing chemotaxis and the secretion of oxygen radicals. Increases phagocytosis by macrophages and enhances secretion of pro-inflammatory mediators. Increases cytotoxic ability of NK cells. Plays a pro-inflammatory role, in synergy with IL1B, by inducing NOS2 which promotes the production of IL6, IL8 and Prostaglandin E2, through a signaling pathway that involves JAK2, PI3K, MAP2K1/MEK1 and MAPK14/p38. In adaptive immunity, promotes the switch of memory T-cells towards T helper-1 cell immune responses. Increases CD4(+)CD25(-) T-cell proliferation and reduces autophagy during TCR (T-cell receptor) stimulation, through MTOR signaling pathway activation and BCL2 up-regulation. The polypeptide is Leptin (LEP) (Pan troglodytes (Chimpanzee)).